A 436-amino-acid polypeptide reads, in one-letter code: 3-ketoacyl-CoA thiolase (436 aa).

The active-site Acyl-thioester intermediate is the Cys-99. Active-site proton acceptor residues include His-392 and Cys-422.

The protein belongs to the thiolase-like superfamily. Thiolase family. In terms of assembly, heterotetramer of two alpha chains (FadJ) and two beta chains (FadI).

Its subcellular location is the cytoplasm. The catalysed reaction is an acyl-CoA + acetyl-CoA = a 3-oxoacyl-CoA + CoA. It participates in lipid metabolism; fatty acid beta-oxidation. Its function is as follows. Catalyzes the final step of fatty acid oxidation in which acetyl-CoA is released and the CoA ester of a fatty acid two carbons shorter is formed. The polypeptide is 3-ketoacyl-CoA thiolase (Shewanella pealeana (strain ATCC 700345 / ANG-SQ1)).